The primary structure comprises 368 residues: H-2 class I histocompatibility antigen, D-P alpha chain (368 aa).

The first 21 residues, 1–21 (MAPRTLLLLLAAALAPTQTRA), serve as a signal peptide directing secretion. Residues 22–111 (GPHSLRYFVT…LLGYYNQSKG (90 aa)) are alpha-1. The Extracellular portion of the chain corresponds to 22-303 (GPHSLRYFVT…RWEPPPSTDS (282 aa)). A glycan (N-linked (GlcNAc...) asparagine) is linked at Asn-107. An alpha-2 region spans residues 112–203 (GSHTIQGMRG…ELGNATLLCT (92 aa)). Cys-122 and Cys-185 are disulfide-bonded. N-linked (GlcNAc...) asparagine glycosylation is found at Asn-197 and Asn-277. Residues 204–295 (DPPKAHVTHH…GLPEPLTLRW (92 aa)) are alpha-3. The region spanning 206–294 (PKAHVTHHPR…EGLPEPLTLR (89 aa)) is the Ig-like C1-type domain. A disulfide bridge connects residues Cys-224 and Cys-280. The tract at residues 296 to 303 (EPPPSTDS) is connecting peptide. The chain crosses the membrane as a helical span at residues 304 to 330 (YMVIVAVLVVLGAVFIIGAVVAFVMMM). Residues 331–368 (RRNTGGKGGDYTLAPGSQSSEMSLRDCKVMVHDSHSLA) lie on the Cytoplasmic side of the membrane. Ser-350 and Ser-353 each carry phosphoserine.

Belongs to the MHC class I family. Heterodimer of an alpha chain and a beta chain (beta-2-microglobulin).

The protein resides in the membrane. Its function is as follows. Involved in the presentation of foreign antigens to the immune system. In Mus musculus (Mouse), this protein is H-2 class I histocompatibility antigen, D-P alpha chain (H2-D1).